Consider the following 416-residue polypeptide: 1-deoxy-D-xylulose 5-phosphate reductoisomerase (416 aa).

NADPH is bound by residues Thr10, Gly11, Ser12, Ile13, Gly36, Arg37, Asn38, and Asn130. Lys131 lines the 1-deoxy-D-xylulose 5-phosphate pocket. Glu132 contributes to the NADPH binding site. Asp156 is a binding site for Mn(2+). Ser157, Glu158, Ser194, and His217 together coordinate 1-deoxy-D-xylulose 5-phosphate. Glu158 contributes to the Mn(2+) binding site. Gly223 is a binding site for NADPH. Residues Ser230, Asn235, Lys236, and Glu239 each coordinate 1-deoxy-D-xylulose 5-phosphate. Glu239 provides a ligand contact to Mn(2+).

This sequence belongs to the DXR family. Mg(2+) serves as cofactor. Requires Mn(2+) as cofactor.

The enzyme catalyses 2-C-methyl-D-erythritol 4-phosphate + NADP(+) = 1-deoxy-D-xylulose 5-phosphate + NADPH + H(+). It functions in the pathway isoprenoid biosynthesis; isopentenyl diphosphate biosynthesis via DXP pathway; isopentenyl diphosphate from 1-deoxy-D-xylulose 5-phosphate: step 1/6. In terms of biological role, catalyzes the NADPH-dependent rearrangement and reduction of 1-deoxy-D-xylulose-5-phosphate (DXP) to 2-C-methyl-D-erythritol 4-phosphate (MEP). This is 1-deoxy-D-xylulose 5-phosphate reductoisomerase from Synechococcus sp. (strain CC9311).